Reading from the N-terminus, the 281-residue chain is DegV domain-containing protein SCO2569 (281 aa).

The DegV domain occupies 5–280; it reads VAIVTDSTAY…PGLLGVVVSS (276 aa). Hexadecanoate contacts are provided by T62 and S95.

In terms of biological role, may bind long-chain fatty acids, such as palmitate, and may play a role in lipid transport or fatty acid metabolism. This is DegV domain-containing protein SCO2569 from Streptomyces coelicolor (strain ATCC BAA-471 / A3(2) / M145).